A 173-amino-acid chain; its full sequence is Crossover junction endodeoxyribonuclease RuvC (173 aa).

Residues D8, E67, and D139 contribute to the active site. The Mg(2+) site is built by D8, E67, and D139.

It belongs to the RuvC family. In terms of assembly, homodimer which binds Holliday junction (HJ) DNA. The HJ becomes 2-fold symmetrical on binding to RuvC with unstacked arms; it has a different conformation from HJ DNA in complex with RuvA. In the full resolvosome a probable DNA-RuvA(4)-RuvB(12)-RuvC(2) complex forms which resolves the HJ. Mg(2+) serves as cofactor.

The protein localises to the cytoplasm. It catalyses the reaction Endonucleolytic cleavage at a junction such as a reciprocal single-stranded crossover between two homologous DNA duplexes (Holliday junction).. Its function is as follows. The RuvA-RuvB-RuvC complex processes Holliday junction (HJ) DNA during genetic recombination and DNA repair. Endonuclease that resolves HJ intermediates. Cleaves cruciform DNA by making single-stranded nicks across the HJ at symmetrical positions within the homologous arms, yielding a 5'-phosphate and a 3'-hydroxyl group; requires a central core of homology in the junction. The consensus cleavage sequence is 5'-(A/T)TT(C/G)-3'. Cleavage occurs on the 3'-side of the TT dinucleotide at the point of strand exchange. HJ branch migration catalyzed by RuvA-RuvB allows RuvC to scan DNA until it finds its consensus sequence, where it cleaves and resolves the cruciform DNA. In Yersinia pseudotuberculosis serotype O:1b (strain IP 31758), this protein is Crossover junction endodeoxyribonuclease RuvC.